Reading from the N-terminus, the 737-residue chain is MISVTDIRRAFLDNECHTITKAFGYLHEDKAIALIKIGFHPTYLPKVLYNNVVEFVPEKLYLFKPRTVAPLDLISTITKLKNVDKFASHINYHKNSILITGDKSLIVKCMPYMIISDDDIRFIREQFVGTNSIEYILSFINKESIYRMSYQFSENEIVTIINRDHFMYEPIYEHQVLDSDFLKTMLDKYGIVPINSGIIDELYPEAIIEILMAVVRPRDAIRFLDIVNKNQLTEDSVKNYIINDIRRGKIDYYIPYVEDFLEDRTEDLGIYANIFFEDAIDITKLDITKTELEHISKYINYYTTYIDHIVNIILQNNYIDILASIIDYVQDVLTEELCIRIVCESTNPVPVTSLPIHSTLVMVMCIQMKYVDIVEFLDEIDIDTLIEKGADPITEYTFTTRWYNKHNDLITLYIKKYGFCPMMMKRLMFEYPLTKEASDHLLKTMDENRGAIMFFPRTICTLPYLLCCNYKLIQKPIPFKEENRNIVYKKTNRVLCFDLLENSAFKSLIKIDSIPGLKTYNMKDITYEKSNNIICVRFIPQESIHNEERRIKLQLFDIARLASYGLYYIPSRYLSSWTPVVNMIEGREYTNPQKIECLVILDLFSEEFIEYQNLGNAVSNKYELEYTISNYQAAINCLMSTLLIYLVLGSIRSISKTENFVLSILNIFYKGLKINELLSEPVSGVCIELDKIKDRASSGDSSFIFLKKNELSKTLSLCEKVCVETILDNNQSFKSSK.

At Met-1 the chain carries N-acetylmethionine; by host. A disulfide bridge connects residues Cys-496 and Cys-535.

This sequence belongs to the orthopoxvirus OPG064 family. Interacts with host KLC2; this interaction promotes IEV trafficking by engaging the host kinesin-1 complex. Interacts with protein OPG056. Post-translationally, N-acetylated on initiator methionine by host.

Functionally, plays a role in intracellular enveloped virus (IEV) transport to the cell surface on microtubules. Together with protein OPG056, forms a complex that interacts with host KLC2 (kinesin light chain isoform 2) to engage the kinesin-1 complex and thereby promote IEV trafficking. This chain is Protein OPG064 (OPG064), found in Homo sapiens (Human).